We begin with the raw amino-acid sequence, 197 residues long: Holliday junction branch migration complex subunit RuvA (197 aa).

The tract at residues 1 to 64 is domain I; the sequence is MYEYIKGTYM…EDFIGLYGFG (64 aa). The tract at residues 65-143 is domain II; that stretch reads SKEELELFNK…VNLDEGIQTD (79 aa). The segment at 144 to 149 is flexible linker; sequence SNDIKV. Residues 149 to 197 form a domain III region; sequence VSSKILEEAKEALMSLGYSEKECEKALKNVEEKESLEIIIKESLKFLMN.

The protein belongs to the RuvA family. Homotetramer. Forms an RuvA(8)-RuvB(12)-Holliday junction (HJ) complex. HJ DNA is sandwiched between 2 RuvA tetramers; dsDNA enters through RuvA and exits via RuvB. An RuvB hexamer assembles on each DNA strand where it exits the tetramer. Each RuvB hexamer is contacted by two RuvA subunits (via domain III) on 2 adjacent RuvB subunits; this complex drives branch migration. In the full resolvosome a probable DNA-RuvA(4)-RuvB(12)-RuvC(2) complex forms which resolves the HJ.

It localises to the cytoplasm. Its function is as follows. The RuvA-RuvB-RuvC complex processes Holliday junction (HJ) DNA during genetic recombination and DNA repair, while the RuvA-RuvB complex plays an important role in the rescue of blocked DNA replication forks via replication fork reversal (RFR). RuvA specifically binds to HJ cruciform DNA, conferring on it an open structure. The RuvB hexamer acts as an ATP-dependent pump, pulling dsDNA into and through the RuvAB complex. HJ branch migration allows RuvC to scan DNA until it finds its consensus sequence, where it cleaves and resolves the cruciform DNA. The sequence is that of Holliday junction branch migration complex subunit RuvA from Hathewaya histolytica (Clostridium histolyticum).